The primary structure comprises 485 residues: Protein nucleotidyltransferase YdiU (485 aa).

ATP is bound by residues glycine 90, glycine 92, arginine 93, lysine 113, aspartate 125, glycine 126, arginine 176, and arginine 183. Residue aspartate 252 is the Proton acceptor of the active site. Mg(2+) is bound by residues asparagine 253 and aspartate 262. An ATP-binding site is contributed by aspartate 262.

Belongs to the SELO family. Mg(2+) serves as cofactor. The cofactor is Mn(2+).

It catalyses the reaction L-seryl-[protein] + ATP = 3-O-(5'-adenylyl)-L-seryl-[protein] + diphosphate. It carries out the reaction L-threonyl-[protein] + ATP = 3-O-(5'-adenylyl)-L-threonyl-[protein] + diphosphate. The catalysed reaction is L-tyrosyl-[protein] + ATP = O-(5'-adenylyl)-L-tyrosyl-[protein] + diphosphate. The enzyme catalyses L-histidyl-[protein] + UTP = N(tele)-(5'-uridylyl)-L-histidyl-[protein] + diphosphate. It catalyses the reaction L-seryl-[protein] + UTP = O-(5'-uridylyl)-L-seryl-[protein] + diphosphate. It carries out the reaction L-tyrosyl-[protein] + UTP = O-(5'-uridylyl)-L-tyrosyl-[protein] + diphosphate. Functionally, nucleotidyltransferase involved in the post-translational modification of proteins. It can catalyze the addition of adenosine monophosphate (AMP) or uridine monophosphate (UMP) to a protein, resulting in modifications known as AMPylation and UMPylation. This is Protein nucleotidyltransferase YdiU from Aliivibrio fischeri (strain ATCC 700601 / ES114) (Vibrio fischeri).